The following is a 230-amino-acid chain: Demethylmenaquinone methyltransferase (230 aa).

Residues T62, D80, 100–101 (DA), and S117 contribute to the S-adenosyl-L-methionine site.

Belongs to the class I-like SAM-binding methyltransferase superfamily. MenG/UbiE family.

It carries out the reaction a 2-demethylmenaquinol + S-adenosyl-L-methionine = a menaquinol + S-adenosyl-L-homocysteine + H(+). It functions in the pathway quinol/quinone metabolism; menaquinone biosynthesis; menaquinol from 1,4-dihydroxy-2-naphthoate: step 2/2. Methyltransferase required for the conversion of demethylmenaquinol (DMKH2) to menaquinol (MKH2). This Mycobacterium sp. (strain JLS) protein is Demethylmenaquinone methyltransferase.